A 261-amino-acid chain; its full sequence is 5'-nucleotidase SurE (261 aa).

A divalent metal cation is bound by residues Asp-8, Asp-9, Ser-43, and Asn-96.

This sequence belongs to the SurE nucleotidase family. A divalent metal cation is required as a cofactor.

It localises to the cytoplasm. It catalyses the reaction a ribonucleoside 5'-phosphate + H2O = a ribonucleoside + phosphate. In terms of biological role, nucleotidase that shows phosphatase activity on nucleoside 5'-monophosphates. This is 5'-nucleotidase SurE from Cereibacter sphaeroides (strain ATCC 17029 / ATH 2.4.9) (Rhodobacter sphaeroides).